Reading from the N-terminus, the 221-residue chain is Oxaloacetate tautomerase FAHD1, mitochondrial (221 aa).

The N-terminal 24 residues, 1-24 (MASTKPLSRFWEWGKNIVCVGRNY), are a transit peptide targeting the mitochondrion. Arg22 contacts oxalate. At Ser37 the chain carries Phosphoserine. Mg(2+) contacts are provided by Glu68, Glu70, and Asp99. The residue at position 110 (Lys110) is an N6-acetyllysine. Lys112 bears the N6-succinyllysine mark. Lys120 is a binding site for oxalate.

The protein belongs to the FAH family. Homodimer. The cofactor is Mg(2+). Requires Mn(2+) as cofactor. In terms of tissue distribution, ubiquitous with higher expression in the liver and the kidney (at protein level).

It is found in the mitochondrion. The protein localises to the cytoplasm. Its subcellular location is the cytosol. It carries out the reaction oxaloacetate = enol-oxaloacetate. It catalyses the reaction oxaloacetate + H(+) = pyruvate + CO2. The catalysed reaction is a 3-acylpyruvate + H2O = a carboxylate + pyruvate + H(+). The enzyme catalyses acetylpyruvate + H2O = acetate + pyruvate + H(+). It carries out the reaction 3-fumarylpyruvate + H2O = fumarate + pyruvate + H(+). With respect to regulation, oxaloacetate decarboxylation is potently and competitively inhibited by oxalate. Functionally, tautomerase that converts enol-oxaloacetate, a strong inhibitor of succinate dehydrogenase, to the physiological keto form of oxaloacetate. It is thereby required to maximize aerobic respiration efficiency by preventing succinate dehydrogenase inhibition. Also acts as a weak oxaloacetate decarboxylase (ODx), catalyzing the decarboxylation of oxaloacetate (OAA) to pyruvate and CO(2), and as such is likely a regulatory enzyme in the TCA cycle. Also displays acylpyruvase activity, being able to hydrolyze acetylpyruvate and fumarylpyruvate in vitro. The chain is Oxaloacetate tautomerase FAHD1, mitochondrial from Mus musculus (Mouse).